A 185-amino-acid chain; its full sequence is Ribosome-recycling factor (185 aa).

Belongs to the RRF family.

It localises to the cytoplasm. Functionally, responsible for the release of ribosomes from messenger RNA at the termination of protein biosynthesis. May increase the efficiency of translation by recycling ribosomes from one round of translation to another. This is Ribosome-recycling factor from Pseudarthrobacter chlorophenolicus (strain ATCC 700700 / DSM 12829 / CIP 107037 / JCM 12360 / KCTC 9906 / NCIMB 13794 / A6) (Arthrobacter chlorophenolicus).